Consider the following 301-residue polypeptide: ATP synthase gamma chain (301 aa).

This sequence belongs to the ATPase gamma chain family. As to quaternary structure, F-type ATPases have 2 components, CF(1) - the catalytic core - and CF(0) - the membrane proton channel. CF(1) has five subunits: alpha(3), beta(3), gamma(1), delta(1), epsilon(1). CF(0) has three main subunits: a, b and c.

Its subcellular location is the cell inner membrane. Functionally, produces ATP from ADP in the presence of a proton gradient across the membrane. The gamma chain is believed to be important in regulating ATPase activity and the flow of protons through the CF(0) complex. The polypeptide is ATP synthase gamma chain (Bordetella petrii (strain ATCC BAA-461 / DSM 12804 / CCUG 43448)).